A 417-amino-acid chain; its full sequence is Serine hydroxymethyltransferase (417 aa).

Residues Leu121 and 125–127 (GHL) each bind (6S)-5,6,7,8-tetrahydrofolate. N6-(pyridoxal phosphate)lysine is present on Lys229. 355-357 (SPF) is a (6S)-5,6,7,8-tetrahydrofolate binding site.

Belongs to the SHMT family. Homodimer. Pyridoxal 5'-phosphate serves as cofactor.

It localises to the cytoplasm. It catalyses the reaction (6R)-5,10-methylene-5,6,7,8-tetrahydrofolate + glycine + H2O = (6S)-5,6,7,8-tetrahydrofolate + L-serine. The protein operates within one-carbon metabolism; tetrahydrofolate interconversion. It functions in the pathway amino-acid biosynthesis; glycine biosynthesis; glycine from L-serine: step 1/1. Functionally, catalyzes the reversible interconversion of serine and glycine with tetrahydrofolate (THF) serving as the one-carbon carrier. This reaction serves as the major source of one-carbon groups required for the biosynthesis of purines, thymidylate, methionine, and other important biomolecules. Also exhibits THF-independent aldolase activity toward beta-hydroxyamino acids, producing glycine and aldehydes, via a retro-aldol mechanism. This is Serine hydroxymethyltransferase from Shewanella baltica (strain OS185).